The primary structure comprises 321 residues: uncharacterized protein (321 aa).

Residues 1–5 (MKQQA) are Cytoplasmic-facing. A helical membrane pass occupies residues 6–26 (GIGILLALTTAICWGALPIAM). Residues 17-144 (ICWGALPIAM…LLSGLVMFFN (128 aa)) enclose the EamA 1 domain. Residues 27 to 35 (KQVLEVMEP) are Periplasmic-facing. The helical transmembrane segment at 36 to 56 (PTIVFYRFLMASIGLGAILAV) threads the bilayer. Residues 57-70 (KKRLPPLRVFRKPR) are Cytoplasmic-facing. A helical transmembrane segment spans residues 71–91 (WLILLAVATAGLFGNFILFSS). Topologically, residues 92–99 (SLQYLSPT) are periplasmic. The helical transmembrane segment at 100–120 (ASQVIGQLSPVGMMVASVFIL) threads the bilayer. Topologically, residues 121 to 130 (KEKMRSTQVV) are cytoplasmic. The chain crosses the membrane as a helical span at residues 131–151 (GALMLLSGLVMFFNTSLVEIF). Residues 152–156 (TKLTD) lie on the Periplasmic side of the membrane. Residues 157 to 177 (YTWGVIFGVGAATVWVSYGVA) form a helical membrane-spanning segment. The EamA 2 domain maps to 169 to 292 (TVWVSYGVAQ…GYLGAFVVVA (124 aa)). Over 178 to 190 (QKVLLRRLASPQI) the chain is Cytoplasmic. Residues 191-211 (LFLLYTLCTIALFPLAKPGVI) traverse the membrane as a helical segment. Topologically, residues 212–216 (AQLSH) are periplasmic. Residues 217–237 (WQLACLIFCGLNTLVGYGALA) form a helical membrane-spanning segment. The Cytoplasmic segment spans residues 238-249 (EAMARWQAAQVS). The chain crosses the membrane as a helical span at residues 250-270 (AIITLTPLFTLFFSDLLSLAW). At 271 to 278 (PDFFARPM) the chain is on the periplasmic side. A helical membrane pass occupies residues 279-299 (LNLLGYLGAFVVVAGAMYSAI). At 300–321 (GHRIWGGLRKHTTVVSQPRAGE) the chain is on the cytoplasmic side.

This sequence belongs to the EamA transporter family.

It is found in the cell inner membrane. This is an uncharacterized protein from Escherichia coli O157:H7.